The following is an 87-amino-acid chain: MNLELPKAEIRSATRVVGGPVTPRKGPPKFKQRQTRQFKSKPPKKGVQGFGDDIPGMEGLGTDITVICPWEAFNHLELHELAQYGII.

M1 bears the N-acetylmethionine mark. Residues 16-54 (VVGGPVTPRKGPPKFKQRQTRQFKSKPPKKGVQGFGDDI) are disordered. Residues 26-44 (GPPKFKQRQTRQFKSKPPK) show a composition bias toward basic residues.

This sequence belongs to the rod/cone cGMP-PDE gamma subunit family. As to quaternary structure, oligomer composed of two catalytic chains (alpha and beta), an inhibitory chain (gamma) and the delta chain.

It catalyses the reaction 3',5'-cyclic GMP + H2O = GMP + H(+). In terms of biological role, participates in processes of transmission and amplification of the visual signal. cGMP-PDEs are the effector molecules in G-protein-mediated phototransduction in vertebrate rods and cones. This Cavia porcellus (Guinea pig) protein is Retinal rod rhodopsin-sensitive cGMP 3',5'-cyclic phosphodiesterase subunit gamma (PDE6G).